Consider the following 238-residue polypeptide: Ribonuclease PH (238 aa).

Phosphate-binding positions include R86 and 124–126 (GTR).

Belongs to the RNase PH family. As to quaternary structure, homohexameric ring arranged as a trimer of dimers.

It carries out the reaction tRNA(n+1) + phosphate = tRNA(n) + a ribonucleoside 5'-diphosphate. Its function is as follows. Phosphorolytic 3'-5' exoribonuclease that plays an important role in tRNA 3'-end maturation. Removes nucleotide residues following the 3'-CCA terminus of tRNAs; can also add nucleotides to the ends of RNA molecules by using nucleoside diphosphates as substrates, but this may not be physiologically important. Probably plays a role in initiation of 16S rRNA degradation (leading to ribosome degradation) during starvation. This chain is Ribonuclease PH, found in Sphingopyxis alaskensis (strain DSM 13593 / LMG 18877 / RB2256) (Sphingomonas alaskensis).